The chain runs to 563 residues: Inclusion membrane protein M (563 aa).

At 1–36 the chain is on the cytoplasmic side; it reads MVYFRAHQPRHTPKTFPLEVHHSFSDKHPQIAKAMR. The chain crosses the membrane as a helical span at residues 37–57; it reads ITGIALAALSLLAVVACVIAV. Ser-58 is a topological domain (vacuolar). A helical transmembrane segment spans residues 59–79; it reads AGGAAIPLAVISGIAVMSGLL. The Cytoplasmic portion of the chain corresponds to 80–252; sequence SAATIICSAK…VLKVALSLGV (173 aa). A helical transmembrane segment spans residues 253 to 273; the sequence is LAGVAALIIFLPPSLPFIAVI. Gly-274 is a topological domain (vacuolar). Residues 275-295 form a helical membrane-spanning segment; the sequence is VSSLALGMASFLMIRGIKYLL. Topologically, residues 296-563 are cytoplasmic; it reads EHSPLNRKQL…QLAQYLLDNH (268 aa).

Belongs to the chlamydial CPn_0065/CT_288/TC_0561 family. Interacts with host CCDC146. In host cells infected with C.trachomatis incM, CCDC146 is recruited to the periphery of the pathogen-containing vacuole but recruitment is not dependent on incM.

It localises to the host vacuole. It is found in the host pathogen-containing vacuole. Its subcellular location is the host pathogen-containing vacuole membrane. The protein resides in the host pathogen-containing vacuole lumen. The protein localises to the secreted. Functionally, interferes with host cell cytokinesis, centrosome positioning and Golgi distribution, and contributes to the morphology and stability of the pathogen-containing vacuole. May exert its effects by acting directly or indirectly on host microtubules. The chain is Inclusion membrane protein M from Chlamydia trachomatis serovar D (strain ATCC VR-885 / DSM 19411 / UW-3/Cx).